The primary structure comprises 689 residues: SH3 domain-binding protein 1 (689 aa).

A compositionally biased stretch (basic residues) spans 1–11 (MMKRQLHRMRQ). The tract at residues 1 to 24 (MMKRQLHRMRQLAHTGSSGRTPET) is disordered. The segment at 1-275 (MMKRQLHRMR…TAAPFSRVYG (275 aa)) is interaction with CGNL1. Positions 17–262 (SSGRTPETAE…RDNHSQADSS (246 aa)) constitute a BAR domain. A phosphoserine mark is found at Ser241 and Ser262. One can recognise a Rho-GAP domain in the interval 276–469 (VSLRTHLQDL…VLIQNADTLF (194 aa)). The interval 470–689 (PGDINFSVSG…RPRGLISETD (220 aa)) is interaction with CD2AP. Positions 507-689 (TAATPTPTPA…RPRGLISETD (183 aa)) are disordered. 2 positions are modified to phosphoserine: Ser539 and Ser545. Over residues 565–575 (PARPTMPPPQP) the composition is skewed to pro residues. Residues 576 to 594 (SSSRSSPPALSLPAGSVSP) show a composition bias toward low complexity. Phosphoserine is present on Ser586. A Phosphothreonine modification is found at Thr596. The SH3-binding signature appears at 611 to 620 (APTVPPPLPP). Residues 613–625 (TVPPPLPPAPPQP) are compositionally biased toward pro residues. Ser641 carries the post-translational modification Phosphoserine. Positions 670–680 (PPTPVLPPQPR) are enriched in pro residues.

In terms of assembly, interacts with RAC1. Interacts with the exocyst via EXOC4 and EXOC8; required for the localization of both SH3BP1 and the exocyst to the leading edge of migrating cells. Interacts with CD2AP and CGNL1; probably part of a complex at cell junctions. Interacts with CAPZA1; recruits CAPZA1 to forming cell junctions. May interact with AFDN. Interacts with PLXND1; they dissociate upon SEMA3E binding to PLXND1 allowing SH3BP1 to transduce downstream signal through RAC1 inactivation. Interacts with ABL1, GRB2 and SRC (via SH3 domain).

It is found in the cell projection. The protein localises to the cell junction. The protein resides in the tight junction. It localises to the adherens junction. Its subcellular location is the phagocytic cup. It is found in the nucleus. The protein localises to the cytoplasm. The protein resides in the cytosol. Its function is as follows. GTPase activating protein/GAP which specifically converts GTP-bound Rho-type GTPases including RAC1 and CDC42 in their inactive GDP-bound form. By specifically inactivating RAC1 at the leading edge of migrating cells, it regulates the spatiotemporal organization of cell protrusions which is important for proper cell migration. Also negatively regulates CDC42 in the process of actin remodeling and the formation of epithelial cell junctions. Through its GAP activity toward RAC1 and/or CDC42 plays a specific role in phagocytosis of large particles. Specifically recruited by a PI3 kinase/PI3K-dependent mechanism to sites of large particles engagement, inactivates RAC1 and/or CDC42 allowing the reorganization of the underlying actin cytoskeleton required for engulfment. It also plays a role in angiogenesis and the process of repulsive guidance as part of a semaphorin-plexin signaling pathway. Following the binding of PLXND1 to extracellular SEMA3E it dissociates from PLXND1 and inactivates RAC1, inducing the intracellular reorganization of the actin cytoskeleton and the collapse of cells. The polypeptide is SH3 domain-binding protein 1 (Rattus norvegicus (Rat)).